The chain runs to 172 residues: Adenine phosphoribosyltransferase (172 aa).

This sequence belongs to the purine/pyrimidine phosphoribosyltransferase family. Homodimer.

It is found in the cytoplasm. It carries out the reaction AMP + diphosphate = 5-phospho-alpha-D-ribose 1-diphosphate + adenine. The protein operates within purine metabolism; AMP biosynthesis via salvage pathway; AMP from adenine: step 1/1. Functionally, catalyzes a salvage reaction resulting in the formation of AMP, that is energically less costly than de novo synthesis. In Anaeromyxobacter dehalogenans (strain 2CP-C), this protein is Adenine phosphoribosyltransferase.